A 154-amino-acid chain; its full sequence is Interleukin-2 (154 aa).

An N-terminal signal peptide occupies residues 1–20; the sequence is MYRMQLLSCIALSLALVTNS. The O-linked (GalNAc...) threonine glycan is linked to Thr23. The cysteines at positions 78 and 126 are disulfide-linked.

This sequence belongs to the IL-2 family.

Its subcellular location is the secreted. Cytokine produced by activated CD4-positive helper T-cells and to a lesser extend activated CD8-positive T-cells and natural killer (NK) cells that plays pivotal roles in the immune response and tolerance. Binds to a receptor complex composed of either the high-affinity trimeric IL-2R (IL2RA/CD25, IL2RB/CD122 and IL2RG/CD132) or the low-affinity dimeric IL-2R (IL2RB and IL2RG). Interaction with the receptor leads to oligomerization and conformation changes in the IL-2R subunits resulting in downstream signaling starting with phosphorylation of JAK1 and JAK3. In turn, JAK1 and JAK3 phosphorylate the receptor to form a docking site leading to the phosphorylation of several substrates including STAT5. This process leads to activation of several pathways including STAT, phosphoinositide-3-kinase/PI3K and mitogen-activated protein kinase/MAPK pathways. Functions as a T-cell growth factor and can increase NK-cell cytolytic activity as well. Promotes strong proliferation of activated B-cells and subsequently immunoglobulin production. Plays a pivotal role in regulating the adaptive immune system by controlling the survival and proliferation of regulatory T-cells, which are required for the maintenance of immune tolerance. Moreover, participates in the differentiation and homeostasis of effector T-cell subsets, including Th1, Th2, Th17 as well as memory CD8-positive T-cells. This Macaca fascicularis (Crab-eating macaque) protein is Interleukin-2 (IL2).